The sequence spans 316 residues: Serine protease 45 (316 aa).

The signal sequence occupies residues 1–38; sequence MAASLSRLSAGLAASRPLGLSRSFLLLVLLLLNSGYKG. In terms of domain architecture, Peptidase S1 spans 49–290; that stretch reads WWPKNLDLSR…YSRWIKKQIS (242 aa). Cys74 and Cys90 are oxidised to a cystine. The active-site Charge relay system is His89. Asn110 carries an N-linked (GlcNAc...) asparagine glycan. Asp137 (charge relay system) is an active-site residue. Asn162 and Asn186 each carry an N-linked (GlcNAc...) asparagine glycan. Intrachain disulfides connect Cys171-Cys248, Cys206-Cys229, and Cys238-Cys266. Ser242 acts as the Charge relay system in catalysis.

Belongs to the peptidase S1 family.

The protein resides in the secreted. This chain is Serine protease 45 (PRSS45), found in Bos taurus (Bovine).